Reading from the N-terminus, the 792-residue chain is MKEELKREYERIKDRISPEEFEELIEKKKEELGDIGFMDDLTIASTVVDDILKEKNTMLSEKPEHRMDTISKLEEGAETPVTGRVMKISSPRTFTTRKGREGKLANVIIADDTGELRAVFWTENIKLLKKFREGDVIRIKDVNIRGGFGGRKEAHLMPRSTVEVLDPEDYPEFPEYREEITPIGDLVEDDEVNVIARITGVSRVRTFERDGREGRFISLDIMDATGSTTYTLWNNDVNLVEELGLKEGDAVKILWAQPRRRDDKVTLTHTSLTRVVPGEYDVPEFREELVKIGDLHEMRNVTVMGLVTKVNDPVEFERNDGTTGSVKSIEIADDTGSARVTLWDEDTRIKINKGDIIRISGANVEFDDFNQSYRINTNFNTRITLNPESDGALLKVLEEYREQMRPMKISEILEMEDEGEEVDVVGRIFSLSDPREFEREDGTGIVRSMELADETGKIRISLWDEKAEKPMNIGDAVRIENARIRLGLYSVELSAGRTTRIVNPLPEDMEDLPSFEELEEMLYQTKKIADLEEDDRNIRIIARVVDLFEPREFQRGDGTPGLVRTAEFADDTGSIRASLWDDAAEKPLSIGDPVKIENPRVVFRDDMGGGRLELSIGNSSRIEPASERDLEGLPSFDELQEMLYPHRDIADLDEDSRNVLIEGELIEMSGRRILSIKCPSCNERLDLSDENICNFCGELVDEPRYLLMIPGRIMDDTGEVMITFFGREAESILEMTTDEVVNIINQSADESALEERVEDLNGVTVRVIGNADMDVYSEELRFIPRKVVKKEL.

DNA-binding regions (OB) lie at residues 81–140 (VTGR…IRIK), 192–273 (VNVI…TSLT), 301–365 (VTVM…ANVE), and 422–494 (VDVV…VELS). The C4-type zinc finger occupies 678–696 (CPSCNERLDLSDENICNFC).

Probably binds DNA polymerase PolB. Binds helicase Hel308, in presence and absence of DNA.

Functionally, inhibits DNA polymerase activity of PolB, which can be overcome by RFC and PNCA. Stimulates 3'-to 5'-exonuclease activity of PolB at 30 degrees Celsius, but has no effect at 50 or 70 degrees Celsius. Bind ssDNA and replication forks; replication forks structures bind both Hel308 and this protein. Has no effect on helicase activity of Hel308; may help target the helicase to DNA substrates that require DNA re-modeling. This chain is Replication factor A (rpa), found in Methanothermobacter thermautotrophicus (strain ATCC 29096 / DSM 1053 / JCM 10044 / NBRC 100330 / Delta H) (Methanobacterium thermoautotrophicum).